Consider the following 226-residue polypeptide: MNSLEPAALAQAIDHTLLAADASREQIATLCAEAREHGFYSVCVNSSQVPFAARQLAGSAVKVCAVVGFPLGAGLSASKASEAALTIAAGAQEIDMVLNIGWLKDGLFDEVRDDIAAVLQACGKVPLKVILETCLLDEAQKVRACEICRELGVAFVKTSTGFSRSGATLEDVALMRRVVGPDIGVKASGGVRDVATARAMIEAGATRLGTSSGIAIVTGAGTGAGY.

Asp-95 functions as the Proton donor/acceptor in the catalytic mechanism. The active-site Schiff-base intermediate with acetaldehyde is the Lys-157. The active-site Proton donor/acceptor is Lys-186.

This sequence belongs to the DeoC/FbaB aldolase family. DeoC type 1 subfamily.

The protein resides in the cytoplasm. It carries out the reaction 2-deoxy-D-ribose 5-phosphate = D-glyceraldehyde 3-phosphate + acetaldehyde. It functions in the pathway carbohydrate degradation; 2-deoxy-D-ribose 1-phosphate degradation; D-glyceraldehyde 3-phosphate and acetaldehyde from 2-deoxy-alpha-D-ribose 1-phosphate: step 2/2. Partially inhibited by acetaldehyde. After incubation for 2, 4 and 6 hours in 300 mM acetaldehyde at 25 degrees Celsius, retains approximately 61.32%, 42.33% and 34.73% of the initial 2-deoxy-D-ribose-5-phosphate (DR5P) cleavage activity, respectively. Catalyzes a reversible aldol reaction between acetaldehyde and D-glyceraldehyde 3-phosphate to generate 2-deoxy-D-ribose 5-phosphate. Its function is as follows. In vitro, DERA can catalyze the aldol condensation of chloroacetaldehyde (CHAD) and acetaldehyde (ACD), yielding (S)-4-chloro-3-hydroxybutanal ((S)-CHB), which can combine with another aldehyde to form (3R,5S)-6-chloro-2,4,6-trideoxyhexapyranose (CTeHP), a key intermediate for statin drugs. The protein is Deoxyribose-phosphate aldolase of Pseudomonas syringae pv. syringae (strain B728a).